The primary structure comprises 79 residues: Exodeoxyribonuclease 7 small subunit (79 aa).

This sequence belongs to the XseB family. As to quaternary structure, heterooligomer composed of large and small subunits.

Its subcellular location is the cytoplasm. The catalysed reaction is Exonucleolytic cleavage in either 5'- to 3'- or 3'- to 5'-direction to yield nucleoside 5'-phosphates.. Functionally, bidirectionally degrades single-stranded DNA into large acid-insoluble oligonucleotides, which are then degraded further into small acid-soluble oligonucleotides. The polypeptide is Exodeoxyribonuclease 7 small subunit (Lactococcus lactis subsp. cremoris (strain SK11)).